The primary structure comprises 444 residues: Tubulin gamma chain (444 aa).

144–150 (SGGTGSG) contributes to the GTP binding site.

This sequence belongs to the tubulin family.

The protein resides in the cytoplasm. It localises to the cytoskeleton. Its subcellular location is the microtubule organizing center. The protein localises to the centrosome. It is found in the cell junction. The protein resides in the hemidesmosome. It localises to the adherens junction. In terms of biological role, tubulin is the major constituent of microtubules. The gamma chain is found at microtubule organizing centers (MTOC) such as the spindle poles or the centrosome, suggesting that it is involved in the minus-end nucleation of microtubule assembly. This Caenorhabditis elegans protein is Tubulin gamma chain (tbg-1).